Here is a 367-residue protein sequence, read N- to C-terminus: Inositol-3-phosphate synthase (367 aa).

Residue Ser-2 is modified to N-acetylserine. Lys-73 is covalently cross-linked (Isoglutamyl lysine isopeptide (Lys-Gln) (interchain with Q-Cter in protein Pup)). Residues Asp-78, Ala-137, Tyr-157, Ser-200, Asp-235, and Lys-248 each coordinate NAD(+).

It belongs to the myo-inositol 1-phosphate synthase family. NAD(+) serves as cofactor. Post-translationally, pupylated at Lys-73 by the prokaryotic ubiquitin-like protein Pup, which leads to its degradation by the proteasome.

The enzyme catalyses D-glucose 6-phosphate = 1D-myo-inositol 3-phosphate. Functionally, key enzyme in myo-inositol biosynthesis pathway that catalyzes the conversion of glucose 6-phosphate to 1D-myo-inositol 3-phosphate in a NAD-dependent manner. The chain is Inositol-3-phosphate synthase (ino1) from Mycobacterium tuberculosis (strain ATCC 25618 / H37Rv).